The following is a 347-amino-acid chain: D-alanine--D-alanine ligase (347 aa).

Positions 131 to 333 (KRVLESAGIA…YPDLIERLVE (203 aa)) constitute an ATP-grasp domain. An ATP-binding site is contributed by 161–216 (EEELTYPVFTKPSNMGSSVGISKSENQEELRQALKLAFQYDSRVLVEQGVNAREIE). 3 residues coordinate Mg(2+): Asp287, Glu300, and Asn302.

The protein belongs to the D-alanine--D-alanine ligase family. Mg(2+) serves as cofactor. Mn(2+) is required as a cofactor.

It localises to the cytoplasm. The enzyme catalyses 2 D-alanine + ATP = D-alanyl-D-alanine + ADP + phosphate + H(+). It participates in cell wall biogenesis; peptidoglycan biosynthesis. Functionally, cell wall formation. The sequence is that of D-alanine--D-alanine ligase from Streptococcus pneumoniae (strain Hungary19A-6).